Reading from the N-terminus, the 188-residue chain is MASTNDLKNGLVLNLDGQLWSVVNFQHVKPGKGGAFVRTTLKNVLSGKVVDKTFNAGVKVDTANVDRREMTYLYNDGTDYVFMDPDTYDQVGVAASVVGDAADYMLENSQVVVARHDDNPLYVELPASVELDIQHTDPGVQGDRSTGGTKPATLETGAEIQVPLFLNTGDKVKVDPRDGRYLGRVSTK.

This sequence belongs to the elongation factor P family.

It is found in the cytoplasm. The protein operates within protein biosynthesis; polypeptide chain elongation. Involved in peptide bond synthesis. Stimulates efficient translation and peptide-bond synthesis on native or reconstituted 70S ribosomes in vitro. Probably functions indirectly by altering the affinity of the ribosome for aminoacyl-tRNA, thus increasing their reactivity as acceptors for peptidyl transferase. This chain is Elongation factor P, found in Saccharopolyspora erythraea (strain ATCC 11635 / DSM 40517 / JCM 4748 / NBRC 13426 / NCIMB 8594 / NRRL 2338).